Reading from the N-terminus, the 336-residue chain is Dihydroorotate dehydrogenase (quinone) (336 aa).

FMN-binding positions include 62–66 and Thr-86; that span reads AGLDK. Lys-66 serves as a coordination point for substrate. 111–115 contributes to the substrate binding site; that stretch reads NRMGF. Asn-139 and Asn-172 together coordinate FMN. Asn-172 provides a ligand contact to substrate. Ser-175 serves as the catalytic Nucleophile. Asn-177 is a substrate binding site. Residues Lys-217 and Thr-245 each coordinate FMN. 246–247 is a binding site for substrate; sequence NT. Residues Gly-268, Gly-297, and 318-319 contribute to the FMN site; that span reads YS.

The protein belongs to the dihydroorotate dehydrogenase family. Type 2 subfamily. As to quaternary structure, monomer. It depends on FMN as a cofactor.

It is found in the cell membrane. It catalyses the reaction (S)-dihydroorotate + a quinone = orotate + a quinol. Its pathway is pyrimidine metabolism; UMP biosynthesis via de novo pathway; orotate from (S)-dihydroorotate (quinone route): step 1/1. In terms of biological role, catalyzes the conversion of dihydroorotate to orotate with quinone as electron acceptor. The polypeptide is Dihydroorotate dehydrogenase (quinone) (Cronobacter sakazakii (strain ATCC BAA-894) (Enterobacter sakazakii)).